A 118-amino-acid chain; its full sequence is Small ribosomal subunit protein uS13 (118 aa).

The disordered stretch occupies residues 94–118; sequence SLPLRGQRTKTNARTRKGPRKPIRK.

It belongs to the universal ribosomal protein uS13 family. As to quaternary structure, part of the 30S ribosomal subunit. Forms a loose heterodimer with protein S19. Forms two bridges to the 50S subunit in the 70S ribosome.

Located at the top of the head of the 30S subunit, it contacts several helices of the 16S rRNA. In the 70S ribosome it contacts the 23S rRNA (bridge B1a) and protein L5 of the 50S subunit (bridge B1b), connecting the 2 subunits; these bridges are implicated in subunit movement. Contacts the tRNAs in the A and P-sites. In Shewanella halifaxensis (strain HAW-EB4), this protein is Small ribosomal subunit protein uS13.